A 426-amino-acid polypeptide reads, in one-letter code: Serine--tRNA ligase (426 aa).

233–235 lines the L-serine pocket; it reads TSE. Residue 264-266 participates in ATP binding; sequence RSE. Glu287 is an L-serine binding site. Residue 351–354 participates in ATP binding; sequence EISS. An L-serine-binding site is contributed by Ser387.

This sequence belongs to the class-II aminoacyl-tRNA synthetase family. Type-1 seryl-tRNA synthetase subfamily. Homodimer. The tRNA molecule binds across the dimer.

The protein resides in the cytoplasm. It catalyses the reaction tRNA(Ser) + L-serine + ATP = L-seryl-tRNA(Ser) + AMP + diphosphate + H(+). It carries out the reaction tRNA(Sec) + L-serine + ATP = L-seryl-tRNA(Sec) + AMP + diphosphate + H(+). It functions in the pathway aminoacyl-tRNA biosynthesis; selenocysteinyl-tRNA(Sec) biosynthesis; L-seryl-tRNA(Sec) from L-serine and tRNA(Sec): step 1/1. Its function is as follows. Catalyzes the attachment of serine to tRNA(Ser). Is also able to aminoacylate tRNA(Sec) with serine, to form the misacylated tRNA L-seryl-tRNA(Sec), which will be further converted into selenocysteinyl-tRNA(Sec). This is Serine--tRNA ligase from Xylella fastidiosa (strain M23).